The following is a 610-amino-acid chain: MNNRVLVSVAWPYANGPRHIGHVAGFGVPSDVFARYQRMSGAEVLMVSGTDEHGTPLLVQADKEGVSVKELADRYNRQIVEDLAGLGLSYDLFTRTTTRNHYAVVQDLFKGLYENGYMIKETTMGAVSPSTGRTLPDRYIEGTCPICGASGARGDQCDNCGNQLDPADLINPVSKINGETPKFIETEHFLLDLPALADALAAWLKDRKDWRPNVLKFSLNLLEDLRPRAMSRDIDWGIPIPVEGWQDNGAKKLYVWFDAVVGYLSASIEWAYRTGDPEAWKKWWNDPESSGYYFMGKDNITFHSQIWPAELLGYQGKGAKAGSVHSLGELNLPTEVVSSEFLTMSGSKFSSSKGIVIYVKDFLKEFGADPLRYFIAVAGPENNDTDFTWDEFVRRVNNELANGWGNLVNRTVSMAYKNFGEVPTPGELTESDKKILAQAEEAFGVVGEALAHSRFKQGITHAMHIVGEANAYIAEQEPWKLAKDESQRERLATVLWTALQVVSDCNVLLTPYLPHIAQQVHETLGRDGVWAAKPQIVEVTDDMPVEPIGVGIPEAGQTYPVIMGDYAAQQARWARIDVQPGTALSKPKPLIAKLDPELGETGPEWAPVNP.

The 'HIGH' region signature appears at 12–22; the sequence is PYANGPRHIGH. 4 residues coordinate Zn(2+): Cys144, Cys147, Cys157, and Cys160. The 'KMSKS' region signature appears at 348–352; the sequence is KFSSS. Ser351 contributes to the ATP binding site.

Belongs to the class-I aminoacyl-tRNA synthetase family. MetG type 1 subfamily. In terms of assembly, monomer. It depends on Zn(2+) as a cofactor.

Its subcellular location is the cytoplasm. It carries out the reaction tRNA(Met) + L-methionine + ATP = L-methionyl-tRNA(Met) + AMP + diphosphate. In terms of biological role, is required not only for elongation of protein synthesis but also for the initiation of all mRNA translation through initiator tRNA(fMet) aminoacylation. In Corynebacterium diphtheriae (strain ATCC 700971 / NCTC 13129 / Biotype gravis), this protein is Methionine--tRNA ligase.